The chain runs to 252 residues: Chitooligosaccharide deacetylase (252 aa).

His-61 and His-125 together coordinate Mg(2+).

This sequence belongs to the YdjC deacetylase family. ChbG subfamily. As to quaternary structure, homodimer. Mg(2+) is required as a cofactor.

The protein localises to the cytoplasm. It catalyses the reaction N,N'-diacetylchitobiose + H2O = N-acetyl-beta-D-glucosaminyl-(1-&gt;4)-D-glucosamine + acetate. The catalysed reaction is diacetylchitobiose-6'-phosphate + H2O = N'-monoacetylchitobiose-6'-phosphate + acetate. It functions in the pathway glycan degradation; chitin degradation. Its function is as follows. Involved in the degradation of chitin. ChbG is essential for growth on the acetylated chitooligosaccharides chitobiose and chitotriose but is dispensable for growth on cellobiose and chitosan dimer, the deacetylated form of chitobiose. Deacetylation of chitobiose-6-P and chitotriose-6-P is necessary for both the activation of the chb promoter by the regulatory protein ChbR and the hydrolysis of phosphorylated beta-glucosides by the phospho-beta-glucosidase ChbF. Catalyzes the removal of only one acetyl group from chitobiose-6-P to yield monoacetylchitobiose-6-P, the inducer of ChbR and the substrate of ChbF. This Escherichia coli O45:K1 (strain S88 / ExPEC) protein is Chitooligosaccharide deacetylase.